Reading from the N-terminus, the 62-residue chain is UPF0434 protein FTM_0733 (62 aa).

The protein belongs to the UPF0434 family.

The sequence is that of UPF0434 protein FTM_0733 from Francisella tularensis subsp. mediasiatica (strain FSC147).